A 342-amino-acid polypeptide reads, in one-letter code: Foldase protein PrsA (342 aa).

The signal sequence occupies residues 1–22 (MVSVKKIVASALVGVLMFSAVG). The N-palmitoyl cysteine moiety is linked to residue C23. C23 is lipidated: S-diacylglycerol cysteine. The PpiC domain maps to 189–284 (DSGVLTKHLL…FGYHIIQAGA (96 aa)).

Belongs to the PrsA family.

The protein localises to the cell membrane. It carries out the reaction [protein]-peptidylproline (omega=180) = [protein]-peptidylproline (omega=0). In terms of biological role, plays a major role in protein secretion by helping the post-translocational extracellular folding of several secreted proteins. The polypeptide is Foldase protein PrsA (Clostridium perfringens (strain ATCC 13124 / DSM 756 / JCM 1290 / NCIMB 6125 / NCTC 8237 / Type A)).